Consider the following 487-residue polypeptide: Betaine aldehyde dehydrogenase (487 aa).

K(+) contacts are provided by Ile27 and Asp93. 149–151 (GAW) is a binding site for NAD(+). Lys161 functions as the Charge relay system in the catalytic mechanism. Residues 175–178 (KPSE) and 228–231 (SVPT) each bind NAD(+). Glu249 functions as the Proton acceptor in the catalytic mechanism. Gly251, Cys283, and Glu384 together coordinate NAD(+). Cys283 (nucleophile) is an active-site residue. At Cys283 the chain carries Cysteine sulfenic acid (-SOH). K(+) is bound by residues Lys454 and Gly457. The active-site Charge relay system is Glu461.

This sequence belongs to the aldehyde dehydrogenase family. Dimer of dimers. Requires K(+) as cofactor.

The enzyme catalyses betaine aldehyde + NAD(+) + H2O = glycine betaine + NADH + 2 H(+). It functions in the pathway amine and polyamine biosynthesis; betaine biosynthesis via choline pathway; betaine from betaine aldehyde: step 1/1. Involved in the biosynthesis of the osmoprotectant glycine betaine. Catalyzes the irreversible oxidation of betaine aldehyde to the corresponding acid. This chain is Betaine aldehyde dehydrogenase, found in Mesorhizobium japonicum (strain LMG 29417 / CECT 9101 / MAFF 303099) (Mesorhizobium loti (strain MAFF 303099)).